The sequence spans 55 residues: Ferredoxin (55 aa).

4Fe-4S ferredoxin-type domains are found at residues 2 to 26 (YKIT…ISEG) and 27 to 55 (SIYE…VPED). [4Fe-4S] cluster-binding residues include Cys8, Cys11, Cys14, Cys18, Cys36, Cys39, Cys42, and Cys46.

It depends on [4Fe-4S] cluster as a cofactor.

Ferredoxins are iron-sulfur proteins that transfer electrons in a wide variety of metabolic reactions. The chain is Ferredoxin from Butyribacterium methylotrophicum.